Consider the following 170-residue polypeptide: ATP synthase subunit b (170 aa).

The chain crosses the membrane as a helical span at residues 30-50; sequence FFFVLAIFLVVLAVIGTFVVP.

This sequence belongs to the ATPase B chain family. F-type ATPases have 2 components, F(1) - the catalytic core - and F(0) - the membrane proton channel. F(1) has five subunits: alpha(3), beta(3), gamma(1), delta(1), epsilon(1). F(0) has three main subunits: a(1), b(2) and c(10-14). The alpha and beta chains form an alternating ring which encloses part of the gamma chain. F(1) is attached to F(0) by a central stalk formed by the gamma and epsilon chains, while a peripheral stalk is formed by the delta and b chains.

The protein resides in the cell membrane. In terms of biological role, f(1)F(0) ATP synthase produces ATP from ADP in the presence of a proton or sodium gradient. F-type ATPases consist of two structural domains, F(1) containing the extramembraneous catalytic core and F(0) containing the membrane proton channel, linked together by a central stalk and a peripheral stalk. During catalysis, ATP synthesis in the catalytic domain of F(1) is coupled via a rotary mechanism of the central stalk subunits to proton translocation. Component of the F(0) channel, it forms part of the peripheral stalk, linking F(1) to F(0). This Mycobacterium ulcerans (strain Agy99) protein is ATP synthase subunit b.